The chain runs to 358 residues: Forkhead box protein I1c (358 aa).

The span at 1-13 (MNSIHLPSHQRTS) shows a compositional bias: polar residues. Disordered regions lie at residues 1–25 (MNSI…PKGA) and 191–255 (DNGN…PSGI). Positions 106-200 (RPPYSYSALI…DNGNFRRKRK (95 aa)) form a DNA-binding region, fork-head.

Its subcellular location is the nucleus. Its function is as follows. Probable transcription factor. This chain is Forkhead box protein I1c, found in Xenopus tropicalis (Western clawed frog).